We begin with the raw amino-acid sequence, 473 residues long: Dolichyl-diphosphooligosaccharide--protein glycosyltransferase subunit 1B (473 aa).

The first 27 residues, 1-27 (MAPSLSTAVSSLLLLLLLAAAISVSSS), serve as a signal peptide directing secretion. The Lumenal portion of the chain corresponds to 28-439 (PPMPEDSIRV…PFQVYYEFNP (412 aa)). N-linked (GlcNAc...) asparagine glycans are attached at residues asparagine 307 and asparagine 361. The helical transmembrane segment at 440–460 (IFMLAEPLMLISAVFLFFVAC) threads the bilayer. The Cytoplasmic segment spans residues 461–473 (IAYLHMDLSIGKS).

The protein belongs to the OST1 family. In terms of assembly, component of the oligosaccharyltransferase (OST) complex.

Its subcellular location is the endoplasmic reticulum membrane. The protein operates within protein modification; protein glycosylation. In terms of biological role, subunit of the oligosaccharyl transferase (OST) complex that catalyzes the initial transfer of a defined glycan (Glc(3)Man(9)GlcNAc(2) in eukaryotes) from the lipid carrier dolichol-pyrophosphate to an asparagine residue within an Asn-X-Ser/Thr consensus motif in nascent polypeptide chains, the first step in protein N-glycosylation. N-glycosylation occurs cotranslationally and the complex associates with the Sec61 complex at the channel-forming translocon complex that mediates protein translocation across the endoplasmic reticulum (ER). All subunits are required for a maximal enzyme activity. The chain is Dolichyl-diphosphooligosaccharide--protein glycosyltransferase subunit 1B (OST1B) from Oryza sativa subsp. japonica (Rice).